Consider the following 278-residue polypeptide: Biotin synthase (278 aa).

The Radical SAM core domain occupies 1–227 (MQIMLCAISN…QSVVMVAGGR (227 aa)). Residues C16, C20, and C23 each coordinate [4Fe-4S] cluster. Residues C60, C95, and C153 each coordinate [2Fe-2S] cluster.

This sequence belongs to the radical SAM superfamily. Biotin synthase family. In terms of assembly, homodimer. [4Fe-4S] cluster serves as cofactor. It depends on [2Fe-2S] cluster as a cofactor.

It carries out the reaction (4R,5S)-dethiobiotin + (sulfur carrier)-SH + 2 reduced [2Fe-2S]-[ferredoxin] + 2 S-adenosyl-L-methionine = (sulfur carrier)-H + biotin + 2 5'-deoxyadenosine + 2 L-methionine + 2 oxidized [2Fe-2S]-[ferredoxin]. Its pathway is cofactor biosynthesis; biotin biosynthesis; biotin from 7,8-diaminononanoate: step 2/2. Catalyzes the conversion of dethiobiotin (DTB) to biotin by the insertion of a sulfur atom into dethiobiotin via a radical-based mechanism. This chain is Biotin synthase, found in Campylobacter jejuni subsp. jejuni serotype O:6 (strain 81116 / NCTC 11828).